A 1262-amino-acid polypeptide reads, in one-letter code: Unconventional myosin-VI (1262 aa).

In terms of domain architecture, Myosin N-terminal SH3-like spans 2–53 (EDGKPVWAPHPTDGFQMGNIVDIGPDSLTIEPLNQKGKTFLALINQVFPAEE). Positions 57-771 (KDVEDNCSLM…KFAEFDQIMK (715 aa)) constitute a Myosin motor domain. 151–158 (GESGAGKT) provides a ligand contact to ATP. At S267 the chain carries Phosphoserine. Positions 273 to 317 (YLNRGCTRFFANKETDKQILQNRKSPEYVKAGSLKDPLLDDHGDF) are responsible for slow ATPase activity. T405 is subject to Phosphothreonine. The residue at position 604 (S604) is a Phosphoserine. Actin-binding regions lie at residues 651 to 673 (LNLL…KPNL) and 665 to 672 (FIRCIKPN). The tract at residues 782–810 (KRVNLWLVCSRWKKVQWCSLSVIKLKNKI) is required for binding calmodulin. The IQ domain maps to 814–834 (AEACIKMQKTIRMWLCKRRHK). The three-helix bundle stretch occupies residues 835-916 (PRIDGLVKVG…EDLLSALQKK (82 aa)). Residues 864–984 (KPEVNRQIKN…EDDEKRIQAE (121 aa)) are a coiled coil. An SAH region spans residues 917 to 984 (KQQEEEAERL…EDDEKRIQAE (68 aa)). Positions 933-955 (MEKERKRREEDEERRRKEEEERR) are disordered. Phosphoserine is present on S1025. The interaction with TAX1BP1 and CALCOCO2/NDP52 stretch occupies residues 1034-1253 (LRRGPAVQAT…ESRQARPTYA (220 aa)). The interaction with OPTN stretch occupies residues 1084-1086 (RRL). Position 1123 is a phosphoserine (S1123). The interval 1125-1253 (QQNPAAQLPA…ESRQARPTYA (129 aa)) is interaction with TOM1.

This sequence belongs to the TRAFAC class myosin-kinesin ATPase superfamily. Myosin family. As to quaternary structure, homodimer; dimerization seems to implicate the unfolding of the three-helix bundle region creating an additional calmodulin binding site, and cargo binding. Able to function as a monomer under specific conditions in vitro. Forms a complex with CFTR and DAB2 in the apical membrane of epithelial cells. Component of the DISP/DOCK7-induced septin displacement complex, at least composed of DOCK7, LRCH3 and MYO6. Binding to calmodulin through a unique insert, not found in other myosins, located in the neck region between the motor domain and the IQ domain appears to contribute to the directionality reversal. This interaction occurs only if the C-terminal lobe of calmodulin is occupied by calcium. Interaction with F-actin/ACTN1 occurs only at the apical brush border domain of the proximal tubule cells. Interacts with DAB2. In vitro, the C-terminal globular tail binds a C-terminal region of DAB2. Interacts with CFTR. Interacts with CABP5. Interacts (via residues 1128-1256) with TOM1 (via residues 392-463). Interacts (via residues 1060-1285) with OPTN. Interacts (via residues 1060-1285) with TAX1BP1 and CALCOCO2/NDP52. Interacts with TOM1L2. Interacts with CLIC5; may work together in a complex which also includes RDX and MYO6 to stabilize linkages between the plasma membrane and subjacent actin cytoskeleton at the base of stereocilia. In terms of processing, phosphorylation in the motor domain, induced by EGF, results in translocation of MYO6 from the cell surface to membrane ruffles and affects F-actin dynamics. Phosphorylated in vitro by p21-activated kinase (PAK). Within the cochlea, expressed specifically within the sensory hair cells (at protein level). Expressed in the inner and outer plexiform layer of the retina (at protein level). Widely expressed. Expressed in the brain, kidney, liver, and testis.

It is found in the golgi apparatus. The protein localises to the trans-Golgi network membrane. The protein resides in the nucleus. Its subcellular location is the cytoplasm. It localises to the perinuclear region. It is found in the membrane. The protein localises to the clathrin-coated pit. The protein resides in the cytoplasmic vesicle. Its subcellular location is the clathrin-coated vesicle. It localises to the cell projection. It is found in the filopodium. The protein localises to the ruffle membrane. The protein resides in the microvillus. Its subcellular location is the cytosol. Its function is as follows. Myosins are actin-based motor molecules with ATPase activity. Unconventional myosins serve in intracellular movements. Myosin 6 is a reverse-direction motor protein that moves towards the minus-end of actin filaments. Has slow rate of actin-activated ADP release due to weak ATP binding. Functions in a variety of intracellular processes such as vesicular membrane trafficking and cell migration. Required for the structural integrity of the Golgi apparatus via the p53-dependent pro-survival pathway. Appears to be involved in a very early step of clathrin-mediated endocytosis in polarized epithelial cells. Together with TOM1, mediates delivery of endocytic cargo to autophagosomes thereby promoting autophagosome maturation and driving fusion with lysosomes. Links TOM1 with autophagy receptors, such as TAX1BP1; CALCOCO2/NDP52 and OPTN. May act as a regulator of F-actin dynamics. As part of the DISP complex, may regulate the association of septins with actin and thereby regulate the actin cytoskeleton. May play a role in transporting DAB2 from the plasma membrane to specific cellular targets. May play a role in the extension and network organization of neurites. Required for structural integrity of inner ear hair cells. Required for the correct localization of CLIC5 and RDX at the stereocilium base. Modulates RNA polymerase II-dependent transcription. The chain is Unconventional myosin-VI (Myo6) from Mus musculus (Mouse).